Reading from the N-terminus, the 388-residue chain is Methylthioribose-1-phosphate isomerase (388 aa).

Catalysis depends on aspartate 258, which acts as the Proton donor.

This sequence belongs to the eIF-2B alpha/beta/delta subunits family. MtnA subfamily.

It localises to the cytoplasm. Its subcellular location is the nucleus. The catalysed reaction is 5-(methylsulfanyl)-alpha-D-ribose 1-phosphate = 5-(methylsulfanyl)-D-ribulose 1-phosphate. The protein operates within amino-acid biosynthesis; L-methionine biosynthesis via salvage pathway; L-methionine from S-methyl-5-thio-alpha-D-ribose 1-phosphate: step 1/6. Catalyzes the interconversion of methylthioribose-1-phosphate (MTR-1-P) into methylthioribulose-1-phosphate (MTRu-1-P). The protein is Methylthioribose-1-phosphate isomerase of Sordaria macrospora (strain ATCC MYA-333 / DSM 997 / K(L3346) / K-hell).